A 72-amino-acid chain; its full sequence is Translation initiation factor IF-1 (72 aa).

In terms of domain architecture, S1-like spans 1 to 72; the sequence is MAKEDVIEVE…NRGRIVYRYK (72 aa).

This sequence belongs to the IF-1 family. In terms of assembly, component of the 30S ribosomal translation pre-initiation complex which assembles on the 30S ribosome in the order IF-2 and IF-3, IF-1 and N-formylmethionyl-tRNA(fMet); mRNA recruitment can occur at any time during PIC assembly.

Its subcellular location is the cytoplasm. One of the essential components for the initiation of protein synthesis. Stabilizes the binding of IF-2 and IF-3 on the 30S subunit to which N-formylmethionyl-tRNA(fMet) subsequently binds. Helps modulate mRNA selection, yielding the 30S pre-initiation complex (PIC). Upon addition of the 50S ribosomal subunit IF-1, IF-2 and IF-3 are released leaving the mature 70S translation initiation complex. The chain is Translation initiation factor IF-1 from Moorella thermoacetica (strain ATCC 39073 / JCM 9320).